A 155-amino-acid chain; its full sequence is Dau c 1 isoallergen Dau c 1.0401 (155 aa).

This sequence belongs to the BetVI family. In terms of assembly, monomer. As to expression, expressed in roots (at protein level). Expressed in roots.

The protein is Dau c 1 isoallergen Dau c 1.0401 of Daucus carota subsp. sativus (Carrot).